We begin with the raw amino-acid sequence, 118 residues long: Small ribosomal subunit protein uS13 (118 aa).

The disordered stretch occupies residues 92 to 118; it reads RRGLPVRGQRTKTNARTRKGPRKPIKK.

It belongs to the universal ribosomal protein uS13 family. Part of the 30S ribosomal subunit. Forms a loose heterodimer with protein S19. Forms two bridges to the 50S subunit in the 70S ribosome.

Functionally, located at the top of the head of the 30S subunit, it contacts several helices of the 16S rRNA. In the 70S ribosome it contacts the 23S rRNA (bridge B1a) and protein L5 of the 50S subunit (bridge B1b), connecting the 2 subunits; these bridges are implicated in subunit movement. Contacts the tRNAs in the A and P-sites. This chain is Small ribosomal subunit protein uS13, found in Yersinia enterocolitica serotype O:8 / biotype 1B (strain NCTC 13174 / 8081).